The primary structure comprises 164 residues: uncharacterized protein (164 aa).

This is an uncharacterized protein from Rickettsia bellii (strain RML369-C).